The following is a 279-amino-acid chain: MGEPTWEAAEDPDRTLRERLRRGRTLLVSPHPDDVAYSCGGLLAAVGRPAHATLLTVFTRSAWALPRRLRRAGARVVSERRREEELRYCRLRGLAEYRPLGFADAGLRGYDDETELSSPAEADGVRGAVEEAVAEAIRDAGADTVLAPAAVGGHVDHLLVHGAVRGAVGPGGPLTLFYEDLPYAGQRDAVDVERTLREARGLVPFASVDISGVVQQKVRGMYVYGSQTDDECVRETLRHARRGAPRRWTGGTAGAGHAAGRRGAPHTERVWTPAPAGAR.

Zn(2+) is bound by residues histidine 31, aspartate 34, and histidine 157. Positions 245–279 (PRRWTGGTAGAGHAAGRRGAPHTERVWTPAPAGAR) are disordered. Over residues 246-258 (RRWTGGTAGAGHA) the composition is skewed to low complexity.

Belongs to the PIGL family. Zn(2+) serves as cofactor.

The catalysed reaction is 2'-N-acetylparomamine + H2O = paromamine + acetate. It carries out the reaction 2'''-acetyl-6'''-hydroxyneomycin C + H2O = 6'''-deamino-6'''-hydroxyneomycin C + acetate. It participates in antibiotic biosynthesis; neomycin biosynthesis. Deacetylase involved in the biosynthesis of neomycin by mediating 2 steps of the pathway. Deacetylates both 2'-N-acetylparomamine and 2'''-acetyl-6'''-hydroxyneomycin C. In Streptomyces fradiae (Streptomyces roseoflavus), this protein is 2'-N-acetylparomamine deacetylase (neoL).